The following is a 112-amino-acid chain: Probable 4-amino-4-deoxy-L-arabinose-phosphoundecaprenol flippase subunit ArnE (112 aa).

The EamA domain maps to 35–110 (RHILFWLGMA…IVVGIVILGT (76 aa)). 3 helical membrane-spanning segments follow: residues 37 to 57 (ILFWLGMALLCLGCGMLLWLS), 66 to 86 (IAYPMLSLNFVWVTLAGWGIW), and 89 to 109 (PVARRHWLGVGLIVVGIVILG).

This sequence belongs to the ArnE family. In terms of assembly, heterodimer of ArnE and ArnF.

It is found in the cell inner membrane. It participates in bacterial outer membrane biogenesis; lipopolysaccharide biosynthesis. Its function is as follows. Translocates 4-amino-4-deoxy-L-arabinose-phosphoundecaprenol (alpha-L-Ara4N-phosphoundecaprenol) from the cytoplasmic to the periplasmic side of the inner membrane. In Klebsiella pneumoniae (strain 342), this protein is Probable 4-amino-4-deoxy-L-arabinose-phosphoundecaprenol flippase subunit ArnE.